A 101-amino-acid chain; its full sequence is MAKVSAIQKNKSRQKKSQRLHNKRSALKSKIYDKSLSLEQRFSLIIALAQLPRNSSSTRIRNRCELTGRPRGVTRKFGISRNKLRELIGRGLVPGVVKASW.

Positions 1–25 (MAKVSAIQKNKSRQKKSQRLHNKRS) are disordered. The span at 10–25 (NKSRQKKSQRLHNKRS) shows a compositional bias: basic residues.

The protein belongs to the universal ribosomal protein uS14 family. As to quaternary structure, part of the 30S ribosomal subunit. Contacts proteins S3 and S10.

Binds 16S rRNA, required for the assembly of 30S particles and may also be responsible for determining the conformation of the 16S rRNA at the A site. This Rickettsia typhi (strain ATCC VR-144 / Wilmington) protein is Small ribosomal subunit protein uS14.